We begin with the raw amino-acid sequence, 425 residues long: uncharacterized protein (425 aa).

The HD domain occupies 55–181; that stretch reads RYAHSLGVYE…DLDTDRMDYL (127 aa).

This is an uncharacterized protein from Mycoplasma genitalium (strain ATCC 33530 / DSM 19775 / NCTC 10195 / G37) (Mycoplasmoides genitalium).